The sequence spans 212 residues: Adenylate kinase (212 aa).

10–15 (GAGKGT) is a binding site for ATP. The segment at 30–59 (STGDMFRAAMANQTEMGRLAKSYIDKGELV) is NMP. AMP-binding positions include T31, R36, 57–59 (ELV), 86–89 (GYPR), and Q93. An LID region spans residues 127 to 159 (GRIINRKTGETFHKVFNPPVDYKEEDYYQREDD). ATP contacts are provided by residues R128 and 137–138 (TF). AMP is bound by residues R156 and R167. Q195 contributes to the ATP binding site.

Belongs to the adenylate kinase family. In terms of assembly, monomer.

It is found in the cytoplasm. The catalysed reaction is AMP + ATP = 2 ADP. The protein operates within purine metabolism; AMP biosynthesis via salvage pathway; AMP from ADP: step 1/1. Its function is as follows. Catalyzes the reversible transfer of the terminal phosphate group between ATP and AMP. Plays an important role in cellular energy homeostasis and in adenine nucleotide metabolism. This Streptococcus agalactiae serotype Ia (strain ATCC 27591 / A909 / CDC SS700) protein is Adenylate kinase.